The primary structure comprises 149 residues: UPF0336 protein Lxx02810 (149 aa).

Belongs to the UPF0336 family.

This Leifsonia xyli subsp. xyli (strain CTCB07) protein is UPF0336 protein Lxx02810.